Reading from the N-terminus, the 435-residue chain is Serine/threonine-protein kinase 40 (435 aa).

The Protein kinase domain maps to phenylalanine 35–isoleucine 332. ATP is bound by residues leucine 41 to isoleucine 49 and lysine 66. Aspartate 197 (proton acceptor) is an active-site residue.

Belongs to the protein kinase superfamily. CAMK Ser/Thr protein kinase family.

The protein localises to the nucleus. Its subcellular location is the cytoplasm. It catalyses the reaction L-seryl-[protein] + ATP = O-phospho-L-seryl-[protein] + ADP + H(+). The catalysed reaction is L-threonyl-[protein] + ATP = O-phospho-L-threonyl-[protein] + ADP + H(+). Functionally, may be a negative regulator of NF-kappa-B and p53-mediated gene transcription. This is Serine/threonine-protein kinase 40 (Stk40) from Mus musculus (Mouse).